A 195-amino-acid polypeptide reads, in one-letter code: Probable nicotinate-nucleotide adenylyltransferase (195 aa).

It belongs to the NadD family.

The enzyme catalyses nicotinate beta-D-ribonucleotide + ATP + H(+) = deamido-NAD(+) + diphosphate. Its pathway is cofactor biosynthesis; NAD(+) biosynthesis; deamido-NAD(+) from nicotinate D-ribonucleotide: step 1/1. In terms of biological role, catalyzes the reversible adenylation of nicotinate mononucleotide (NaMN) to nicotinic acid adenine dinucleotide (NaAD). This chain is Probable nicotinate-nucleotide adenylyltransferase, found in Chlorobaculum tepidum (strain ATCC 49652 / DSM 12025 / NBRC 103806 / TLS) (Chlorobium tepidum).